Here is a 243-residue protein sequence, read N- to C-terminus: Small ribosomal subunit protein uS3 (243 aa).

The KH type-2 domain maps to 38–106; sequence IRKYLNARLA…DIQINIFEVK (69 aa). Positions 217–243 are disordered; that stretch reads TQTKESGRGGNGNNNGGKNFKRKKNNR.

Belongs to the universal ribosomal protein uS3 family. In terms of assembly, part of the 30S ribosomal subunit. Forms a tight complex with proteins S10 and S14.

Binds the lower part of the 30S subunit head. Binds mRNA in the 70S ribosome, positioning it for translation. The sequence is that of Small ribosomal subunit protein uS3 from Phocaeicola vulgatus (strain ATCC 8482 / DSM 1447 / JCM 5826 / CCUG 4940 / NBRC 14291 / NCTC 11154) (Bacteroides vulgatus).